A 202-amino-acid polypeptide reads, in one-letter code: Arenicin-2 (202 aa).

The first 25 residues, 1 to 25 (MTSTQSVAVYATLILAIFCFNDIHC), serve as a signal peptide directing secretion. The propeptide occupies 26-181 (DPIAEARAAA…SGDNNEPEKR (156 aa)). Positions 73–168 (GDGVEGSVMV…ACQGKSVYWL (96 aa)) constitute a BRICHOS domain. Cystine bridges form between Cys-100–Cys-160 and Cys-184–Cys-201.

Its function is as follows. Has antimicrobial activity against the Gram-negative bacteria E.coli and P.mirabilis, the Gram-positive bacterium L.monocytogenes and the yeast C.albicans. The polypeptide is Arenicin-2 (Arenicola marina (Lugworm)).